The following is a 246-amino-acid chain: uncharacterized protein (246 aa).

This is an uncharacterized protein from Borreliella burgdorferi (strain ATCC 35210 / DSM 4680 / CIP 102532 / B31) (Borrelia burgdorferi).